We begin with the raw amino-acid sequence, 65 residues long: Putative antitoxin PF2058 (65 aa).

It belongs to the UPF0165 family.

Its function is as follows. Possibly the antitoxin component of a type II toxin-antitoxin (TA) system. The protein is Putative antitoxin PF2058 of Pyrococcus furiosus (strain ATCC 43587 / DSM 3638 / JCM 8422 / Vc1).